A 119-amino-acid polypeptide reads, in one-letter code: Developmental pluripotency-associated protein 5B/5C (119 aa).

Residues Pro-24–Leu-86 enclose the KH; atypical domain.

It belongs to the KHDC1 family.

It localises to the cytoplasm. In terms of biological role, involved in the maintenance of embryonic stem (ES) cell pluripotency. Dispensable for self-renewal of pluripotent ES cells and establishment of germ cells. Associates with specific target mRNAs. The protein is Developmental pluripotency-associated protein 5B/5C of Mus musculus (Mouse).